Here is a 337-residue protein sequence, read N- to C-terminus: Phosphate acyltransferase (337 aa).

It belongs to the PlsX family. As to quaternary structure, homodimer. Probably interacts with PlsY.

Its subcellular location is the cytoplasm. It carries out the reaction a fatty acyl-[ACP] + phosphate = an acyl phosphate + holo-[ACP]. The protein operates within lipid metabolism; phospholipid metabolism. In terms of biological role, catalyzes the reversible formation of acyl-phosphate (acyl-PO(4)) from acyl-[acyl-carrier-protein] (acyl-ACP). This enzyme utilizes acyl-ACP as fatty acyl donor, but not acyl-CoA. This chain is Phosphate acyltransferase, found in Aquifex aeolicus (strain VF5).